A 117-amino-acid polypeptide reads, in one-letter code: Spanin, inner membrane subunit (117 aa).

Topologically, residues 1–2 (MH) are cytoplasmic. A helical; Signal-anchor for type II membrane protein transmembrane segment spans residues 3-23 (VSNFTAGLLLLVIAFGGTSII). Residues 24-93 (LKHKVERLET…AKKADVVAHK (70 aa)) adopt a coiled-coil conformation. Residues 24-117 (LKHKVERLET…FAEDIQDLSK (94 aa)) are Periplasmic-facing.

As to quaternary structure, interacts (via C-terminus) with the spanin outer lipoprotein subunit (via C-terminus). Part of the spanin complex which spans the entire periplasmic space. The spanin complex is composed of spanin inner membrane subunit and spanin outer membrane subunit.

It localises to the host cell inner membrane. Its function is as follows. Component of the spanin complex that disrupts the host outer membrane and participates in cell lysis during virus exit. The spanin complex conducts the final step in host lysis by disrupting the outer membrane after holin and endolysin action have permeabilized the inner membrane and degraded the host peptidoglycans. Host outer membrane disruption is possibly due to local fusion between the inner and outer membrane performed by the spanin complex. The sequence is that of Spanin, inner membrane subunit (y13K) from Enterobacteria phage T4 (Bacteriophage T4).